Reading from the N-terminus, the 400-residue chain is MKVLVINCGSSSLKYQLIDMSNEESLAQGLVERIGITGSILTQKVEGKDKYVVETPLKDHQDAIELVLKCLVDENHGVISSMDEISAVGHRVVHGGEKYATSVVINEEVIKALDEFTKLAPLHNPPNIIGINACKALMPKTPMVAVFDTAFHQTMPEKAFMYALPYELYTEDHVRRYGFHGTSHKYVAGEMAKLMNKDISDLKIVTCHIGNGVSITAVDGGKSVDTTMGFTPLDGIIMGSRSGSIDPAIVTYLVKEKGYSIDEVNDILNKKSGVLGISGIGTDFRDIRSAVENDNDPRALLTMDIFGYQVKKQIGAYAAVMGGVDAIVFTAGIGEHAPEIRSRALTNMEFLGIEVDLEKNESHNIGDGMEISKETSKVKVVVIPTNEELMIAKETLELVK.

Asn7 provides a ligand contact to Mg(2+). Lys14 is an ATP binding site. Arg91 lines the substrate pocket. Asp148 functions as the Proton donor/acceptor in the catalytic mechanism. ATP contacts are provided by residues 208 to 212 (HIGNG), 283 to 285 (DFR), and 332 to 336 (GIGEH). Glu387 lines the Mg(2+) pocket.

This sequence belongs to the acetokinase family. As to quaternary structure, homodimer. The cofactor is Mg(2+). Mn(2+) serves as cofactor.

It is found in the cytoplasm. It catalyses the reaction acetate + ATP = acetyl phosphate + ADP. The protein operates within metabolic intermediate biosynthesis; acetyl-CoA biosynthesis; acetyl-CoA from acetate: step 1/2. Its function is as follows. Catalyzes the formation of acetyl phosphate from acetate and ATP. Can also catalyze the reverse reaction. The chain is Acetate kinase from Clostridium beijerinckii (strain ATCC 51743 / NCIMB 8052) (Clostridium acetobutylicum).